The chain runs to 326 residues: MRLHKRLKQNKSLLPSNSTILLAISGGQDSMALLKLIIDLKRLHKWQVEIWHGNHQWHSKSEKTEEELKLWCLKNQISFHSNKADKKEVANEEKARDWRYKNLIMKAKFLSSKNIHFPCTRILTGHTATDRAETVIMNLARGTDLTGLTTLKEQRTIESNIDLTRPLLIFNRNETLEICKDFNLPIWIDPSNENINLTRNKIRKEILPILNSIYKGADSRIASVANRLESYNEDQKLFAKIAIQFCQGEKINSLSRIKLFGLTNSIRQIILSNWLKTMGVKRITALQIEEINTKVSQRKPPGSIHLHGDFLIRWNKEAIYISNKTN.

Serine 25–serine 30 serves as a coordination point for ATP.

This sequence belongs to the tRNA(Ile)-lysidine synthase family.

It localises to the cytoplasm. It catalyses the reaction cytidine(34) in tRNA(Ile2) + L-lysine + ATP = lysidine(34) in tRNA(Ile2) + AMP + diphosphate + H(+). Ligates lysine onto the cytidine present at position 34 of the AUA codon-specific tRNA(Ile) that contains the anticodon CAU, in an ATP-dependent manner. Cytidine is converted to lysidine, thus changing the amino acid specificity of the tRNA from methionine to isoleucine. The sequence is that of tRNA(Ile)-lysidine synthase from Prochlorococcus marinus (strain NATL1A).